The sequence spans 322 residues: Apolipoprotein E (322 aa).

The first 18 residues, 1–18, serve as a signal peptide directing secretion; the sequence is MKVLWAALLVAFLAGCQG. Repeat copies occupy residues 84-105, 106-127, 128-149, 150-171, 172-193, 194-215, 216-238, and 239-260. An 8 X 22 AA approximate tandem repeats region spans residues 84–260; it reads ALMDETMKEL…RLDEVKEQVE (177 aa). Position 147 is a methionine sulfoxide (M147). Phosphoserine is present on S151. The segment at 162 to 172 is LDL and other lipoprotein receptors binding; the sequence is HLRKLRKRLLR. 166–169 serves as a coordination point for heparin; that stretch reads LRKR. The lipid-binding and lipoprotein association stretch occupies residues 214-295; it reads AATVGSSLAG…SWFEPLVEDM (82 aa). The O-linked (GalNAc...) threonine glycan is linked to T216. Residue 234 to 241 coordinates heparin; sequence GERLRARM. The interval 271 to 322 is homooligomerization; the sequence is QQMRLQAEAFQARLKSWFEPLVEDMQRQWAGLVEKVQAAVGASAAPVPGDNH. The specificity for association with VLDL stretch occupies residues 283–295; it reads RLKSWFEPLVEDM.

Belongs to the apolipoprotein A1/A4/E family. Homotetramer. May interact with ABCA1; functionally associated with ABCA1 in the biogenesis of HDLs. May interact with APP/A4 amyloid-beta peptide; the interaction is extremely stable in vitro but its physiological significance is unclear. May interact with MAPT. May interact with MAP2. In the cerebrospinal fluid, interacts with secreted SORL1. Interacts with PMEL; this allows the loading of PMEL luminal fragment on ILVs to induce fibril nucleation. APOE exists as multiple glycosylated and sialylated glycoforms within cells and in plasma. The extent of glycosylation and sialylation are tissue and context specific. In terms of processing, glycated in plasma VLDL. Post-translationally, phosphorylated by FAM20C in the extracellular medium.

The protein resides in the secreted. The protein localises to the extracellular space. It is found in the extracellular matrix. It localises to the extracellular vesicle. Its subcellular location is the endosome. The protein resides in the multivesicular body. Functionally, APOE is an apolipoprotein, a protein associating with lipid particles, that mainly functions in lipoprotein-mediated lipid transport between organs via the plasma and interstitial fluids. APOE is a core component of plasma lipoproteins and is involved in their production, conversion and clearance. Apolipoproteins are amphipathic molecules that interact both with lipids of the lipoprotein particle core and the aqueous environment of the plasma. As such, APOE associates with chylomicrons, chylomicron remnants, very low density lipoproteins (VLDL) and intermediate density lipoproteins (IDL) but shows a preferential binding to high-density lipoproteins (HDL). It also binds a wide range of cellular receptors including the LDL receptor/LDLR, the LDL receptor-related proteins LRP1, LRP2 and LRP8 and the very low-density lipoprotein receptor/VLDLR that mediate the cellular uptake of the APOE-containing lipoprotein particles. Finally, APOE also has a heparin-binding activity and binds heparan-sulfate proteoglycans on the surface of cells, a property that supports the capture and the receptor-mediated uptake of APOE-containing lipoproteins by cells. A main function of APOE is to mediate lipoprotein clearance through the uptake of chylomicrons, VLDLs, and HDLs by hepatocytes. APOE is also involved in the biosynthesis by the liver of VLDLs as well as their uptake by peripheral tissues ensuring the delivery of triglycerides and energy storage in muscle, heart and adipose tissues. By participating in the lipoprotein-mediated distribution of lipids among tissues, APOE plays a critical role in plasma and tissues lipid homeostasis. APOE is also involved in two steps of reverse cholesterol transport, the HDLs-mediated transport of cholesterol from peripheral tissues to the liver, and thereby plays an important role in cholesterol homeostasis. First, it is functionally associated with ABCA1 in the biogenesis of HDLs in tissues. Second, it is enriched in circulating HDLs and mediates their uptake by hepatocytes. APOE also plays an important role in lipid transport in the central nervous system, regulating neuron survival and sprouting. The polypeptide is Apolipoprotein E (APOE) (Ateles geoffroyi (Black-handed spider monkey)).